We begin with the raw amino-acid sequence, 277 residues long: Thymidylate synthase (277 aa).

Arginine 21 provides a ligand contact to dUMP. Histidine 51 contributes to the (6R)-5,10-methylene-5,6,7,8-tetrahydrofolate binding site. 139–140 is a dUMP binding site; the sequence is RR. Cysteine 159 acts as the Nucleophile in catalysis. Residues 179 to 182, asparagine 190, and 220 to 222 contribute to the dUMP site; these read RSAD and HIY. Residue aspartate 182 participates in (6R)-5,10-methylene-5,6,7,8-tetrahydrofolate binding. Alanine 276 provides a ligand contact to (6R)-5,10-methylene-5,6,7,8-tetrahydrofolate.

This sequence belongs to the thymidylate synthase family. Bacterial-type ThyA subfamily. Homodimer.

The protein localises to the cytoplasm. It carries out the reaction dUMP + (6R)-5,10-methylene-5,6,7,8-tetrahydrofolate = 7,8-dihydrofolate + dTMP. It participates in pyrimidine metabolism; dTTP biosynthesis. In terms of biological role, catalyzes the reductive methylation of 2'-deoxyuridine-5'-monophosphate (dUMP) to 2'-deoxythymidine-5'-monophosphate (dTMP) while utilizing 5,10-methylenetetrahydrofolate (mTHF) as the methyl donor and reductant in the reaction, yielding dihydrofolate (DHF) as a by-product. This enzymatic reaction provides an intracellular de novo source of dTMP, an essential precursor for DNA biosynthesis. The chain is Thymidylate synthase from Ruegeria sp. (strain TM1040) (Silicibacter sp.).